The primary structure comprises 68 residues: Large ribosomal subunit protein uL29 (68 aa).

Belongs to the universal ribosomal protein uL29 family.

This Streptococcus suis (strain 98HAH33) protein is Large ribosomal subunit protein uL29.